The sequence spans 602 residues: Transcription factor COE4 (602 aa).

An interaction with DNA region spans residues 64-67 (RKSN). The C5-type zinc finger occupies 152-171 (CRVLLTHEIMCSRCCDRKSC). 2 interaction with DNA regions span residues 198-205 (NCLKNAGN) and 237-240 (NNSK). Residues 256–338 (PCIKAISPGE…CKGCPGRFVY (83 aa)) enclose the IPT/TIG domain. Disordered regions lie at residues 448–476 (PEPGYARSCSSASPRGFAPSPGSQQSGYG) and 558–602 (PVLR…LAYS). Pro residues predominate over residues 560 to 569 (LRPPSSPPQA).

It belongs to the COE family. In terms of assembly, forms either a homodimer or a heterodimer with a related family member. Interacts with MAPK3/ERK1. Interacts with STAT5A. In terms of tissue distribution, most highly expressed in cytotoxic NK cells, especially CD16(+) NK cells, followed by CD8(+) T-cells.

The protein localises to the nucleus. Functionally, transcription factor. Binds to specific sequence motif 5'-CCCNNG[GA]G-3' in regulatory elements of putative target immunoregulatory genes such as NKG7, GZMA, and TBX21. Positively modulates transcription of NKG7. May play a role in regulating FAS/CD95-mediated apoptosis in cytotoxic NK cells and T-cells, probably downstream of interleukin IL2 signaling. The protein is Transcription factor COE4 (EBF4) of Homo sapiens (Human).